Consider the following 552-residue polypeptide: Amino-acid acetyltransferase, mitochondrial (552 aa).

Residues 1-32 constitute a mitochondrion transit peptide; sequence MIKTWIRCLTTEVRYHQPNAHGRSLVMSVLNS. In terms of domain architecture, N-acetyltransferase spans 379 to 545; that stretch reads QTGKSDPVSK…LRDYAKYVRD (167 aa).

The protein belongs to the acetyltransferase family.

Its subcellular location is the mitochondrion. The catalysed reaction is L-glutamate + acetyl-CoA = N-acetyl-L-glutamate + CoA + H(+). It functions in the pathway amino-acid biosynthesis; L-arginine biosynthesis; N(2)-acetyl-L-ornithine from L-glutamate: step 1/4. Functionally, N-acetylglutamate synthase involved in arginine biosynthesis. This is Amino-acid acetyltransferase, mitochondrial (ARG2) from Kluyveromyces lactis (strain ATCC 8585 / CBS 2359 / DSM 70799 / NBRC 1267 / NRRL Y-1140 / WM37) (Yeast).